A 1088-amino-acid polypeptide reads, in one-letter code: RNA-directed RNA polymerase (1088 aa).

The RdRp catalytic domain maps to L501 to I687.

This sequence belongs to the reoviridae RNA-directed RNA polymerase family. Interacts with VP3 (Potential). Interacts with VP2; this interaction activates VP1. Interacts with NSP5; this interaction is probably necessary for the formation of functional virus factories. Interacts with NSP2; this interaction is weak. Mg(2+) is required as a cofactor.

The protein localises to the virion. It catalyses the reaction RNA(n) + a ribonucleoside 5'-triphosphate = RNA(n+1) + diphosphate. Functionally, RNA-directed RNA polymerase that is involved in both transcription and genome replication. Together with VP3 capping enzyme, forms an enzyme complex positioned near the channels situated at each of the five-fold vertices of the core. Following infection, the outermost layer of the virus is lost, leaving a double-layered particle (DLP) made up of the core and VP6 shell. VP1 then catalyzes the transcription of fully conservative plus-strand genomic RNAs that are extruded through the DLP's channels into the cytoplasm where they function as mRNAs for translation of viral proteins. One copy of each of the viral (+)RNAs is also recruited during core assembly, together with newly synthesized polymerase complexes and VP2. The polymerase of these novo-formed particles catalyzes the synthesis of complementary minus-strands leading to dsRNA formation. To do so, the polymerase specifically recognizes and binds 4 bases 5'-UGUG-3' in the conserved 3'-sequence of plus-strand RNA templates. VP2 presumably activates the autoinhibited VP1-RNA complex to coordinate packaging and genome replication. Once dsRNA synthesis is complete, the polymerase switches to the transcriptional mode, thus providing secondary transcription. The chain is RNA-directed RNA polymerase from Homo sapiens (Human).